We begin with the raw amino-acid sequence, 125 residues long: UPF0738 protein GTNG_0708 (125 aa).

Belongs to the UPF0738 family.

This is UPF0738 protein GTNG_0708 from Geobacillus thermodenitrificans (strain NG80-2).